Reading from the N-terminus, the 384-residue chain is Spermidine/putrescine import ATP-binding protein PotA (384 aa).

Residues 6–238 (ITFNNVSKTF…PINHFVANFI (233 aa)) enclose the ABC transporter domain. 40 to 47 (GASGSGKS) lines the ATP pocket.

It belongs to the ABC transporter superfamily. Spermidine/putrescine importer (TC 3.A.1.11.1) family. The complex is composed of two ATP-binding proteins (PotA), two transmembrane proteins (PotB and PotC) and a solute-binding protein (PotD).

Its subcellular location is the cell membrane. The enzyme catalyses ATP + H2O + polyamine-[polyamine-binding protein]Side 1 = ADP + phosphate + polyamineSide 2 + [polyamine-binding protein]Side 1.. Its function is as follows. Part of the ABC transporter complex PotABCD involved in spermidine/putrescine import. Responsible for energy coupling to the transport system. The sequence is that of Spermidine/putrescine import ATP-binding protein PotA from Streptococcus pyogenes serotype M28 (strain MGAS6180).